A 353-amino-acid polypeptide reads, in one-letter code: Photosystem II D2 protein (353 aa).

The residue at position 2 (threonine 2) is an N-acetylthreonine. The residue at position 2 (threonine 2) is a Phosphothreonine. The helical transmembrane segment at 41-61 (CAYFALGGWFTGTTFVTSWYT) threads the bilayer. Histidine 118 contributes to the chlorophyll a binding site. Residues 125-141 (GFMLRQFELARSVQLRP) form a helical membrane-spanning segment. Pheophytin a contacts are provided by glutamine 130 and asparagine 143. Residues 153–166 (VFVSVFLIYPLGQS) form a helical membrane-spanning segment. Histidine 198 contributes to the chlorophyll a binding site. A helical membrane pass occupies residues 208-228 (AALLCAIHGATVENTLFEDGD). The a plastoquinone site is built by histidine 215 and phenylalanine 262. Position 215 (histidine 215) interacts with Fe cation. Histidine 269 contributes to the Fe cation binding site. Residues 279–295 (GLWMSAIGVVGLALNLR) form a helical membrane-spanning segment.

Belongs to the reaction center PufL/M/PsbA/D family. In terms of assembly, PSII is composed of 1 copy each of membrane proteins PsbA, PsbB, PsbC, PsbD, PsbE, PsbF, PsbH, PsbI, PsbJ, PsbK, PsbL, PsbM, PsbT, PsbX, PsbY, PsbZ, Psb30/Ycf12, at least 3 peripheral proteins of the oxygen-evolving complex and a large number of cofactors. It forms dimeric complexes. The D1/D2 heterodimer binds P680, chlorophylls that are the primary electron donor of PSII, and subsequent electron acceptors. It shares a non-heme iron and each subunit binds pheophytin, quinone, additional chlorophylls, carotenoids and lipids. There is also a Cl(-1) ion associated with D1 and D2, which is required for oxygen evolution. The PSII complex binds additional chlorophylls, carotenoids and specific lipids. is required as a cofactor.

Its subcellular location is the plastid. It is found in the chloroplast thylakoid membrane. The catalysed reaction is 2 a plastoquinone + 4 hnu + 2 H2O = 2 a plastoquinol + O2. Photosystem II (PSII) is a light-driven water:plastoquinone oxidoreductase that uses light energy to abstract electrons from H(2)O, generating O(2) and a proton gradient subsequently used for ATP formation. It consists of a core antenna complex that captures photons, and an electron transfer chain that converts photonic excitation into a charge separation. The D1/D2 (PsbA/PsbD) reaction center heterodimer binds P680, the primary electron donor of PSII as well as several subsequent electron acceptors. D2 is needed for assembly of a stable PSII complex. The polypeptide is Photosystem II D2 protein (Welwitschia mirabilis (Tree tumbo)).